Consider the following 374-residue polypeptide: uncharacterized protein (374 aa).

The signal sequence occupies residues 1–23; the sequence is MDSKWFFIVLISFLLVLPSIVTP. Residues 66–374 are disordered; sequence SSSSSSSSSS…SSSSSSSGEN (309 aa).

It localises to the secreted. This is an uncharacterized protein from Dictyostelium discoideum (Social amoeba).